Reading from the N-terminus, the 119-residue chain is Ribonuclease P protein component (119 aa).

It belongs to the RnpA family. Consists of a catalytic RNA component (M1 or rnpB) and a protein subunit.

It catalyses the reaction Endonucleolytic cleavage of RNA, removing 5'-extranucleotides from tRNA precursor.. RNaseP catalyzes the removal of the 5'-leader sequence from pre-tRNA to produce the mature 5'-terminus. It can also cleave other RNA substrates such as 4.5S RNA. The protein component plays an auxiliary but essential role in vivo by binding to the 5'-leader sequence and broadening the substrate specificity of the ribozyme. This is Ribonuclease P protein component from Shewanella woodyi (strain ATCC 51908 / MS32).